A 172-amino-acid chain; its full sequence is Ubiquitin-conjugating enzyme E2 PEX4 (172 aa).

In terms of domain architecture, UBC core spans 14–167 (SASKRLIKEL…VELWCQDSDS (154 aa)). The active-site Glycyl thioester intermediate is cysteine 104.

Belongs to the ubiquitin-conjugating enzyme family.

It carries out the reaction S-ubiquitinyl-[E1 ubiquitin-activating enzyme]-L-cysteine + [E2 ubiquitin-conjugating enzyme]-L-cysteine = [E1 ubiquitin-activating enzyme]-L-cysteine + S-ubiquitinyl-[E2 ubiquitin-conjugating enzyme]-L-cysteine.. Its pathway is protein modification; protein ubiquitination. Functionally, ubiquitin-conjugating enzyme E2 that is essential for peroxisome biogenesis and plays a key role in development, pathogenicity, and cell wall integrity. Required for long and very long-chain fatty acid utilization and is involved in lipid droplet accumulation and the elimination of reactive oxygen species. Controls the expression of proteins involved in protein biosynthesis, fatty acid metabolism, cell wall synthesis, oxidation-reduction reactions, as well as of the enzymes involved in the biosynthesis of the mycotoxin deoxynivalenol (DON), including TRI5, TRI6, and TRI10. This chain is Ubiquitin-conjugating enzyme E2 PEX4, found in Gibberella zeae (strain ATCC MYA-4620 / CBS 123657 / FGSC 9075 / NRRL 31084 / PH-1) (Wheat head blight fungus).